A 255-amino-acid polypeptide reads, in one-letter code: Ribosomal RNA small subunit methyltransferase A (255 aa).

Histidine 12, leucine 14, glycine 39, glutamate 60, aspartate 81, and asparagine 103 together coordinate S-adenosyl-L-methionine.

The protein belongs to the class I-like SAM-binding methyltransferase superfamily. rRNA adenine N(6)-methyltransferase family. RsmA subfamily.

The protein localises to the cytoplasm. The enzyme catalyses adenosine(1518)/adenosine(1519) in 16S rRNA + 4 S-adenosyl-L-methionine = N(6)-dimethyladenosine(1518)/N(6)-dimethyladenosine(1519) in 16S rRNA + 4 S-adenosyl-L-homocysteine + 4 H(+). Functionally, specifically dimethylates two adjacent adenosines (A1518 and A1519) in the loop of a conserved hairpin near the 3'-end of 16S rRNA in the 30S particle. May play a critical role in biogenesis of 30S subunits. This chain is Ribosomal RNA small subunit methyltransferase A, found in Variovorax paradoxus (strain S110).